Reading from the N-terminus, the 190-residue chain is Protein soem-1 (190 aa).

In terms of domain architecture, SH2 spans Y96 to V190.

In terms of assembly, interacts with abl-1. Expressed in PQR, but not AQR, Q neuroblast descendents.

Its function is as follows. Functions downstream of migratory protein mig-13 and may play a role in the control of Q neuroblast migration during larval development. The polypeptide is Protein soem-1 (Caenorhabditis elegans).